The primary structure comprises 124 residues: UPF0231 protein Shewana3_0655 (124 aa).

The protein belongs to the UPF0231 family.

This Shewanella sp. (strain ANA-3) protein is UPF0231 protein Shewana3_0655.